Consider the following 154-residue polypeptide: Small ribosomal subunit protein uS9 (154 aa).

The segment at 133 to 154 is disordered; the sequence is RAKESKKYGLKKARKAPQYSKR. The segment covering 140-154 has biased composition (basic residues); sequence YGLKKARKAPQYSKR.

It belongs to the universal ribosomal protein uS9 family.

The polypeptide is Small ribosomal subunit protein uS9 (Salinispora tropica (strain ATCC BAA-916 / DSM 44818 / JCM 13857 / NBRC 105044 / CNB-440)).